Consider the following 591-residue polypeptide: Aspartate--tRNA(Asp/Asn) ligase (591 aa).

Glu-174 contributes to the L-aspartate binding site. Positions 198–201 (QLFK) are aspartate. Residue Arg-220 participates in L-aspartate binding. ATP-binding positions include 220–222 (RDE) and Gln-229. L-aspartate is bound at residue His-450. An ATP-binding site is contributed by Glu-483. Arg-490 provides a ligand contact to L-aspartate. 535-538 (GLDR) lines the ATP pocket.

Belongs to the class-II aminoacyl-tRNA synthetase family. Type 1 subfamily. Homodimer.

It is found in the cytoplasm. The enzyme catalyses tRNA(Asx) + L-aspartate + ATP = L-aspartyl-tRNA(Asx) + AMP + diphosphate. Functionally, aspartyl-tRNA synthetase with relaxed tRNA specificity since it is able to aspartylate not only its cognate tRNA(Asp) but also tRNA(Asn). Reaction proceeds in two steps: L-aspartate is first activated by ATP to form Asp-AMP and then transferred to the acceptor end of tRNA(Asp/Asn). This is Aspartate--tRNA(Asp/Asn) ligase from Ectopseudomonas mendocina (strain ymp) (Pseudomonas mendocina).